The sequence spans 323 residues: Beta-ketoacyl-[acyl-carrier-protein] synthase III (323 aa).

Active-site residues include Cys-112 and His-250. The interval 251–255 (QANYR) is ACP-binding. The active site involves Asn-280.

It belongs to the thiolase-like superfamily. FabH family. In terms of assembly, homodimer.

The protein resides in the cytoplasm. It carries out the reaction malonyl-[ACP] + acetyl-CoA + H(+) = 3-oxobutanoyl-[ACP] + CO2 + CoA. It functions in the pathway lipid metabolism; fatty acid biosynthesis. Functionally, catalyzes the condensation reaction of fatty acid synthesis by the addition to an acyl acceptor of two carbons from malonyl-ACP. Catalyzes the first condensation reaction which initiates fatty acid synthesis and may therefore play a role in governing the total rate of fatty acid production. Possesses both acetoacetyl-ACP synthase and acetyl transacylase activities. Its substrate specificity determines the biosynthesis of branched-chain and/or straight-chain of fatty acids. This is Beta-ketoacyl-[acyl-carrier-protein] synthase III from Clostridium beijerinckii (strain ATCC 51743 / NCIMB 8052) (Clostridium acetobutylicum).